Reading from the N-terminus, the 562-residue chain is Putative transport protein ECA2683 (562 aa).

Transmembrane regions (helical) follow at residues 8 to 28 (LLNG…LCLG), 32 to 52 (LGPV…LLGQ), 66 to 86 (FMLF…SIFF), 93 to 113 (FMLA…LGKL), 116 to 136 (WGIG…PVLV), and 158 to 178 (HLSL…IFGA). RCK C-terminal domains follow at residues 202-288 (LDVD…NFRD) and 290-373 (KEVF…RIGF). 5 consecutive transmembrane segments (helical) span residues 383–403 (LLAF…TIQF), 406–426 (FTFG…LGFL), 447–467 (FGLM…INSS), 478–498 (SGLI…AYVL), and 537–557 (GTYA…VVIW).

It belongs to the AAE transporter (TC 2.A.81) family. YbjL subfamily.

The protein localises to the cell membrane. The protein is Putative transport protein ECA2683 of Pectobacterium atrosepticum (strain SCRI 1043 / ATCC BAA-672) (Erwinia carotovora subsp. atroseptica).